A 409-amino-acid polypeptide reads, in one-letter code: Nucleoprotein (409 aa).

Disordered regions lie at residues 1 to 32 (MASGKATGKTDAPAPVIKLGGPKPPKVGSSGN), 46 to 69 (SPPLKFEGSGVPDNENLKTSQQHG), 120 to 193 (GADT…SGAE), and 238 to 259 (VDQVFGPRTKGKEGNFGDDKMN). A compositionally biased stretch (low complexity) spans 15-31 (PVIKLGGPKPPKVGSSG). The interval 29–160 (SSGNASWFQA…GNFRWDFIPL (132 aa)) is RNA-binding. Positions 31–156 (GNASWFQAIK…GGPDGNFRWD (126 aa)) constitute a CoV N NTD domain. A compositionally biased stretch (low complexity) spans 162 to 179 (RGRSGKSTAASSAASSRA). 2 stretches are compositionally biased toward basic and acidic residues: residues 180–192 (PSREGSRGRRSGA) and 247–259 (KGKEGNFGDDKMN). Position 190 is a phosphoserine; by host (S190). The CoV N CTD domain maps to 215-331 (TKAKADEMAH…QCVDGVGTRP (117 aa)). The dimerization stretch occupies residues 226 to 333 (RYCKRTIPPG…VDGVGTRPKD (108 aa)). A disulfide bridge links C320 with C323. The tract at residues 327–409 (VGTRPKDDEP…GDSALGENEL (83 aa)) is disordered. A compositionally biased stretch (low complexity) spans 341 to 354 (RSSSRPATRTSSPA). Residues 358–367 (PRPKKEKKTK) show a composition bias toward basic residues. The span at 368-384 (KQDDEVDKALTSDEERN) shows a compositional bias: basic and acidic residues. T378 carries the post-translational modification Phosphothreonine; by host. S379 is modified (phosphoserine; by host).

This sequence belongs to the gammacoronavirus nucleocapsid protein family. Homooligomer. Both monomeric and oligomeric forms interact with RNA. Interacts with protein M. Interacts with NSP3; this interaction serves to tether the genome to the newly translated replicase-transcriptase complex at a very early stage of infection. ADP-ribosylated. The ADP-ribosylation is retained in the virion during infection. In terms of processing, phosphorylated on serine and threonine residues.

The protein resides in the virion. It is found in the host endoplasmic reticulum-Golgi intermediate compartment. The protein localises to the host Golgi apparatus. In terms of biological role, packages the positive strand viral genome RNA into a helical ribonucleocapsid (RNP) and plays a fundamental role during virion assembly through its interactions with the viral genome and membrane protein M. Plays an important role in enhancing the efficiency of subgenomic viral RNA transcription as well as viral replication. The chain is Nucleoprotein from Gallus gallus (Chicken).